Consider the following 113-residue polypeptide: Large ribosomal subunit protein bL17 (113 aa).

Belongs to the bacterial ribosomal protein bL17 family. In terms of assembly, part of the 50S ribosomal subunit. Contacts protein L32.

The sequence is that of Large ribosomal subunit protein bL17 from Clostridium perfringens (strain ATCC 13124 / DSM 756 / JCM 1290 / NCIMB 6125 / NCTC 8237 / Type A).